We begin with the raw amino-acid sequence, 251 residues long: 2-C-methyl-D-erythritol 4-phosphate cytidylyltransferase (251 aa).

The protein belongs to the IspD/TarI cytidylyltransferase family. IspD subfamily.

It carries out the reaction 2-C-methyl-D-erythritol 4-phosphate + CTP + H(+) = 4-CDP-2-C-methyl-D-erythritol + diphosphate. It functions in the pathway isoprenoid biosynthesis; isopentenyl diphosphate biosynthesis via DXP pathway; isopentenyl diphosphate from 1-deoxy-D-xylulose 5-phosphate: step 2/6. Functionally, catalyzes the formation of 4-diphosphocytidyl-2-C-methyl-D-erythritol from CTP and 2-C-methyl-D-erythritol 4-phosphate (MEP). In Cupriavidus pinatubonensis (strain JMP 134 / LMG 1197) (Cupriavidus necator (strain JMP 134)), this protein is 2-C-methyl-D-erythritol 4-phosphate cytidylyltransferase.